We begin with the raw amino-acid sequence, 643 residues long: Phosphomethylpyrimidine synthase (643 aa).

Substrate contacts are provided by residues N248, M277, Y306, H342, 362-364 (SRG), 403-406 (DGLR), and E442. A Zn(2+)-binding site is contributed by H446. Residue Y469 participates in substrate binding. H510 is a Zn(2+) binding site. [4Fe-4S] cluster-binding residues include C590, C593, and C598.

Belongs to the ThiC family. In terms of assembly, homodimer. Requires [4Fe-4S] cluster as cofactor.

The enzyme catalyses 5-amino-1-(5-phospho-beta-D-ribosyl)imidazole + S-adenosyl-L-methionine = 4-amino-2-methyl-5-(phosphooxymethyl)pyrimidine + CO + 5'-deoxyadenosine + formate + L-methionine + 3 H(+). Its pathway is cofactor biosynthesis; thiamine diphosphate biosynthesis. Functionally, catalyzes the synthesis of the hydroxymethylpyrimidine phosphate (HMP-P) moiety of thiamine from aminoimidazole ribotide (AIR) in a radical S-adenosyl-L-methionine (SAM)-dependent reaction. This Burkholderia orbicola (strain MC0-3) protein is Phosphomethylpyrimidine synthase.